The following is a 451-amino-acid chain: Penicillin-binding protein 4* (451 aa).

Catalysis depends on serine 61, which acts as the Acyl-ester intermediate.

This sequence belongs to the beta-lactamase family.

Its subcellular location is the forespore outer membrane. It participates in cell wall biogenesis; peptidoglycan biosynthesis. In terms of biological role, probably involved in peptidoglycan modification during cortex synthesis. The sequence is that of Penicillin-binding protein 4* (pbpE) from Bacillus subtilis (strain 168).